Consider the following 220-residue polypeptide: Endonuclease NucS (220 aa).

The protein belongs to the NucS endonuclease family.

It is found in the cytoplasm. Functionally, cleaves both 3' and 5' ssDNA extremities of branched DNA structures. The protein is Endonuclease NucS of Frankia alni (strain DSM 45986 / CECT 9034 / ACN14a).